The following is an 843-amino-acid chain: DNA-directed RNA polymerase subunit beta' (843 aa).

C70, C72, C85, and C88 together coordinate Zn(2+). The Mg(2+) site is built by D686, D688, and D690.

It belongs to the RNA polymerase beta' chain family. RpoC1 subfamily. In terms of assembly, in plastids the minimal PEP RNA polymerase catalytic core is composed of four subunits: alpha, beta, beta', and beta''. When a (nuclear-encoded) sigma factor is associated with the core the holoenzyme is formed, which can initiate transcription. Requires Mg(2+) as cofactor. The cofactor is Zn(2+).

The protein localises to the plastid. Its subcellular location is the chloroplast. The catalysed reaction is RNA(n) + a ribonucleoside 5'-triphosphate = RNA(n+1) + diphosphate. Functionally, DNA-dependent RNA polymerase catalyzes the transcription of DNA into RNA using the four ribonucleoside triphosphates as substrates. This is DNA-directed RNA polymerase subunit beta' from Trieres chinensis (Marine centric diatom).